The following is a 27-amino-acid chain: Ferric reductase B (27 aa).

As to quaternary structure, homodimer. FAD serves as cofactor.

It catalyses the reaction 2 a Fe(II)-siderophore + NAD(+) + H(+) = 2 a Fe(III)-siderophore + NADH. Its function is as follows. Reductase activity that acts on Fe(3+)-chelates and uses both NADH and NADPH as electron donors. May play a role in iron uptake. In Paracoccus denitrificans, this protein is Ferric reductase B (ferB).